The following is a 156-amino-acid chain: Small ribosomal subunit protein uS7 (156 aa).

Belongs to the universal ribosomal protein uS7 family. As to quaternary structure, part of the 30S ribosomal subunit. Contacts proteins S9 and S11.

Its function is as follows. One of the primary rRNA binding proteins, it binds directly to 16S rRNA where it nucleates assembly of the head domain of the 30S subunit. Is located at the subunit interface close to the decoding center, probably blocks exit of the E-site tRNA. In Nitrosococcus oceani (strain ATCC 19707 / BCRC 17464 / JCM 30415 / NCIMB 11848 / C-107), this protein is Small ribosomal subunit protein uS7.